A 172-amino-acid chain; its full sequence is Small integral membrane protein 23 (172 aa).

Residues 1 to 36 lie on the Cytoplasmic side of the membrane; it reads MATQQVDSRRQVAAEQVAAQLLERRRGSHCDDEKQT. Residues 37–53 traverse the membrane as a helical; Signal-anchor for type II membrane protein segment; the sequence is LLALLILVLYLSTEIWG. Topologically, residues 54–172 are extracellular; sequence SSWEVSERIR…LEISLSGAEL (119 aa). Residues 96–128 adopt a coiled-coil conformation; that stretch reads LKEKLHVFSEKLEEEVQQLEQLAWDLELWLDAL.

The protein localises to the cell membrane. This is Small integral membrane protein 23 (SMIM23) from Homo sapiens (Human).